Here is a 465-residue protein sequence, read N- to C-terminus: Deoxyguanosinetriphosphate triphosphohydrolase-like protein (465 aa).

The interval 1-22 (MKWDKLLNDKRRRESGVTRSKN) is disordered. Residues 63 to 252 (RLTHSMEVST…LEVADDIAYL (190 aa)) enclose the HD domain.

It belongs to the dGTPase family. Type 3 subfamily.

The chain is Deoxyguanosinetriphosphate triphosphohydrolase-like protein from Listeria monocytogenes serovar 1/2a (strain ATCC BAA-679 / EGD-e).